The primary structure comprises 222 residues: Charged multivesicular body protein 4b (222 aa).

Disordered regions lie at residues 1 to 21 and 183 to 222; these read MSLI…PSPQ and GPET…WATA. A coiled-coil region spans residues 21 to 182; that stretch reads QEAIQKLRDT…ELDKNLLEVQ (162 aa). A compositionally biased stretch (low complexity) spans 188–200; the sequence is PLPNVPAAVLPAK.

This sequence belongs to the SNF7 family. Probable core component of the endosomal sorting required for transport complex III (ESCRT-III). ESCRT-III components are thought to multimerize to form a flat lattice on the perimeter membrane of the endosome.

The protein localises to the cytoplasm. It localises to the cytosol. The protein resides in the late endosome membrane. It is found in the midbody. Its function is as follows. Probable core component of the endosomal sorting required for transport complex III (ESCRT-III) which is involved in multivesicular bodies (MVBs) formation and sorting of endosomal cargo proteins into MVBs. MVBs contain intraluminal vesicles (ILVs) that are generated by invagination and scission from the limiting membrane of the endosome and mostly are delivered to lysosomes enabling degradation of membrane proteins, such as stimulated growth factor receptors, lysosomal enzymes and lipids. The polypeptide is Charged multivesicular body protein 4b (chmp4b) (Xenopus tropicalis (Western clawed frog)).